The chain runs to 102 residues: Small ribosomal subunit protein uS10 (102 aa).

This sequence belongs to the universal ribosomal protein uS10 family. In terms of assembly, part of the 30S ribosomal subunit.

In terms of biological role, involved in the binding of tRNA to the ribosomes. In Acidithiobacillus ferrooxidans (strain ATCC 53993 / BNL-5-31) (Leptospirillum ferrooxidans (ATCC 53993)), this protein is Small ribosomal subunit protein uS10.